Consider the following 408-residue polypeptide: CinA-like protein (408 aa).

This sequence belongs to the CinA family.

The sequence is that of CinA-like protein from Thermotoga neapolitana (strain ATCC 49049 / DSM 4359 / NBRC 107923 / NS-E).